The primary structure comprises 205 residues: Outer-membrane lipoprotein LolB (205 aa).

An N-terminal signal peptide occupies residues 1 to 17 (MFLRHFIVFSFIALLAG). A lipid anchor (N-palmitoyl cysteine) is attached at Cys-18. Cys-18 carries the S-diacylglycerol cysteine lipid modification.

This sequence belongs to the LolB family. Monomer.

Its subcellular location is the cell outer membrane. Its function is as follows. Plays a critical role in the incorporation of lipoproteins in the outer membrane after they are released by the LolA protein. The polypeptide is Outer-membrane lipoprotein LolB (Pseudomonas fluorescens (strain ATCC BAA-477 / NRRL B-23932 / Pf-5)).